The primary structure comprises 151 residues: Putative pre-16S rRNA nuclease (151 aa).

Belongs to the YqgF nuclease family.

It is found in the cytoplasm. Its function is as follows. Could be a nuclease involved in processing of the 5'-end of pre-16S rRNA. The chain is Putative pre-16S rRNA nuclease from Neisseria meningitidis serogroup B (strain ATCC BAA-335 / MC58).